Here is a 387-residue protein sequence, read N- to C-terminus: Acyltransferase MdmB (387 aa).

The next 10 helical transmembrane spans lie at 8–28 (LPSL…CHIA), 45–65 (ITTL…FVLA), 85–105 (IYPL…SLAE), 139–161 (TPSW…YRLV), 170–190 (WWCA…TSQF), 209–229 (CWLP…ALIL), 236–256 (GPGV…TQVV), 258–278 (PMFT…TALA), 292–312 (AVLV…FMVI), and 336–356 (ALAL…HTVV).

This sequence belongs to the acyltransferase 3 family.

It is found in the cell membrane. In terms of biological role, catalyzes the acylation of the mycaminose sugar during midecamycin biosynthesis. The sequence is that of Acyltransferase MdmB (mdmB) from Streptomyces mycarofaciens.